The chain runs to 1343 residues: DNA-directed RNA polymerase subunit beta (1343 aa).

This sequence belongs to the RNA polymerase beta chain family. As to quaternary structure, the RNAP catalytic core consists of 2 alpha, 1 beta, 1 beta' and 1 omega subunit. When a sigma factor is associated with the core the holoenzyme is formed, which can initiate transcription.

The enzyme catalyses RNA(n) + a ribonucleoside 5'-triphosphate = RNA(n+1) + diphosphate. Functionally, DNA-dependent RNA polymerase catalyzes the transcription of DNA into RNA using the four ribonucleoside triphosphates as substrates. This chain is DNA-directed RNA polymerase subunit beta, found in Haemophilus influenzae (strain PittEE).